Reading from the N-terminus, the 453-residue chain is Ribosomal protein uS12 methylthiotransferase RimO (453 aa).

In terms of domain architecture, MTTase N-terminal spans 4–120; it reads TSVHIVSLGC…IADHLRVLME (117 aa). Residues cysteine 13, cysteine 49, cysteine 83, cysteine 161, cysteine 165, and cysteine 168 each contribute to the [4Fe-4S] cluster site. A Radical SAM core domain is found at 147 to 377; the sequence is STPPYSAYLK…MEEQAVISHE (231 aa). In terms of domain architecture, TRAM spans 380–450; it reads QTLVGSLQEV…DYDLFAEVIS (71 aa).

This sequence belongs to the methylthiotransferase family. RimO subfamily. Requires [4Fe-4S] cluster as cofactor.

Its subcellular location is the cytoplasm. It carries out the reaction L-aspartate(89)-[ribosomal protein uS12]-hydrogen + (sulfur carrier)-SH + AH2 + 2 S-adenosyl-L-methionine = 3-methylsulfanyl-L-aspartate(89)-[ribosomal protein uS12]-hydrogen + (sulfur carrier)-H + 5'-deoxyadenosine + L-methionine + A + S-adenosyl-L-homocysteine + 2 H(+). Functionally, catalyzes the methylthiolation of an aspartic acid residue of ribosomal protein uS12. This chain is Ribosomal protein uS12 methylthiotransferase RimO, found in Syntrophus aciditrophicus (strain SB).